Here is an 85-residue protein sequence, read N- to C-terminus: NAD(P)H-quinone oxidoreductase subunit O (85 aa).

Belongs to the complex I NdhO subunit family. NDH-1 can be composed of about 15 different subunits; different subcomplexes with different compositions have been identified which probably have different functions.

It localises to the cellular thylakoid membrane. It catalyses the reaction a plastoquinone + NADH + (n+1) H(+)(in) = a plastoquinol + NAD(+) + n H(+)(out). The catalysed reaction is a plastoquinone + NADPH + (n+1) H(+)(in) = a plastoquinol + NADP(+) + n H(+)(out). Its function is as follows. NDH-1 shuttles electrons from an unknown electron donor, via FMN and iron-sulfur (Fe-S) centers, to quinones in the respiratory and/or the photosynthetic chain. The immediate electron acceptor for the enzyme in this species is believed to be plastoquinone. Couples the redox reaction to proton translocation, and thus conserves the redox energy in a proton gradient. Cyanobacterial NDH-1 also plays a role in inorganic carbon-concentration. The polypeptide is NAD(P)H-quinone oxidoreductase subunit O (Synechococcus sp. (strain CC9311)).